The following is a 279-amino-acid chain: Indole-3-glycerol phosphate synthase (279 aa).

Belongs to the TrpC family.

The enzyme catalyses 1-(2-carboxyphenylamino)-1-deoxy-D-ribulose 5-phosphate + H(+) = (1S,2R)-1-C-(indol-3-yl)glycerol 3-phosphate + CO2 + H2O. The protein operates within amino-acid biosynthesis; L-tryptophan biosynthesis; L-tryptophan from chorismate: step 4/5. This Ectopseudomonas mendocina (strain ymp) (Pseudomonas mendocina) protein is Indole-3-glycerol phosphate synthase.